The following is a 305-amino-acid chain: uncharacterized protein (305 aa).

Residues 1–29 (MSKAVSEILGYMYIFGIVMAVLAIVFVQV) form the signal peptide.

This is an uncharacterized protein from Archaeoglobus fulgidus (strain ATCC 49558 / DSM 4304 / JCM 9628 / NBRC 100126 / VC-16).